A 97-amino-acid chain; its full sequence is Glutamyl-tRNA(Gln) amidotransferase subunit C 2 (97 aa).

The protein belongs to the GatC family. In terms of assembly, heterotrimer of A, B and C subunits.

It carries out the reaction L-glutamyl-tRNA(Gln) + L-glutamine + ATP + H2O = L-glutaminyl-tRNA(Gln) + L-glutamate + ADP + phosphate + H(+). The catalysed reaction is L-aspartyl-tRNA(Asn) + L-glutamine + ATP + H2O = L-asparaginyl-tRNA(Asn) + L-glutamate + ADP + phosphate + 2 H(+). Functionally, allows the formation of correctly charged Asn-tRNA(Asn) or Gln-tRNA(Gln) through the transamidation of misacylated Asp-tRNA(Asn) or Glu-tRNA(Gln) in organisms which lack either or both of asparaginyl-tRNA or glutaminyl-tRNA synthetases. The reaction takes place in the presence of glutamine and ATP through an activated phospho-Asp-tRNA(Asn) or phospho-Glu-tRNA(Gln). The protein is Glutamyl-tRNA(Gln) amidotransferase subunit C 2 (gatC2) of Clostridium acetobutylicum (strain ATCC 824 / DSM 792 / JCM 1419 / IAM 19013 / LMG 5710 / NBRC 13948 / NRRL B-527 / VKM B-1787 / 2291 / W).